The primary structure comprises 113 residues: Putative membrane protein insertion efficiency factor (113 aa).

Belongs to the UPF0161 family.

Its subcellular location is the cell inner membrane. Functionally, could be involved in insertion of integral membrane proteins into the membrane. The sequence is that of Putative membrane protein insertion efficiency factor from Campylobacter jejuni subsp. jejuni serotype O:23/36 (strain 81-176).